The chain runs to 376 residues: Methylthioribose-1-phosphate isomerase (376 aa).

Asp-256 (proton donor) is an active-site residue.

Belongs to the eIF-2B alpha/beta/delta subunits family. MtnA subfamily.

It is found in the cytoplasm. It localises to the nucleus. The enzyme catalyses 5-(methylsulfanyl)-alpha-D-ribose 1-phosphate = 5-(methylsulfanyl)-D-ribulose 1-phosphate. It participates in amino-acid biosynthesis; L-methionine biosynthesis via salvage pathway; L-methionine from S-methyl-5-thio-alpha-D-ribose 1-phosphate: step 1/6. Catalyzes the interconversion of methylthioribose-1-phosphate (MTR-1-P) into methylthioribulose-1-phosphate (MTRu-1-P). The polypeptide is Methylthioribose-1-phosphate isomerase (Vitis vinifera (Grape)).